The following is a 236-amino-acid chain: Purine nucleoside phosphorylase DeoD-type (236 aa).

H5 contacts a purine D-ribonucleoside. Phosphate contacts are provided by residues G21, R25, R44, and 88-91 (RVGS). Residues 180–182 (EME) and 204–205 (SD) each bind a purine D-ribonucleoside. D205 (proton donor) is an active-site residue.

The protein belongs to the PNP/UDP phosphorylase family. Homohexamer; trimer of homodimers.

The enzyme catalyses a purine D-ribonucleoside + phosphate = a purine nucleobase + alpha-D-ribose 1-phosphate. It carries out the reaction a purine 2'-deoxy-D-ribonucleoside + phosphate = a purine nucleobase + 2-deoxy-alpha-D-ribose 1-phosphate. Its function is as follows. Catalyzes the reversible phosphorolytic breakdown of the N-glycosidic bond in the beta-(deoxy)ribonucleoside molecules, with the formation of the corresponding free purine bases and pentose-1-phosphate. The polypeptide is Purine nucleoside phosphorylase DeoD-type (Psychromonas ingrahamii (strain DSM 17664 / CCUG 51855 / 37)).